Consider the following 353-residue polypeptide: S-adenosylmethionine:tRNA ribosyltransferase-isomerase (353 aa).

Belongs to the QueA family. Monomer.

It localises to the cytoplasm. The enzyme catalyses 7-aminomethyl-7-carbaguanosine(34) in tRNA + S-adenosyl-L-methionine = epoxyqueuosine(34) in tRNA + adenine + L-methionine + 2 H(+). It participates in tRNA modification; tRNA-queuosine biosynthesis. Transfers and isomerizes the ribose moiety from AdoMet to the 7-aminomethyl group of 7-deazaguanine (preQ1-tRNA) to give epoxyqueuosine (oQ-tRNA). The chain is S-adenosylmethionine:tRNA ribosyltransferase-isomerase from Maricaulis maris (strain MCS10) (Caulobacter maris).